Here is a 264-residue protein sequence, read N- to C-terminus: Rano class II histocompatibility antigen, D-1 beta chain (264 aa).

The N-terminal stretch at 1–26 (MVWLARDSCVAAVILLLTVLSPPVAL) is a signal peptide. Positions 27–120 (VRDPTPRFLE…EISESFLVPR (94 aa)) are beta-1. The Extracellular portion of the chain corresponds to 27–226 (VRDPTPRFLE…AQSTSAQNKK (200 aa)). 2 cysteine pairs are disulfide-bonded: cysteine 42/cysteine 106 and cysteine 144/cysteine 200. N-linked (GlcNAc...) asparagine glycosylation is present at asparagine 46. Residues 121-215 (TVEPKVTVYP…SLPSPVRVEW (95 aa)) are beta-2. The Ig-like C1-type domain maps to 124-228 (PKVTVYPSKT…STSAQNKKMS (105 aa)). The tract at residues 216–226 (KAQSTSAQNKK) is connecting peptide. The helical transmembrane segment at 227-248 (MSGVGGIVLGLLFLGAGLFVYF) threads the bilayer. The Cytoplasmic segment spans residues 249 to 264 (RNQKGQSGLQPTGLLN).

It belongs to the MHC class II family.

It is found in the membrane. Its function is as follows. Involved in the presentation of foreign antigens to the immune system. This is Rano class II histocompatibility antigen, D-1 beta chain (RT1-Db1) from Rattus norvegicus (Rat).